Consider the following 164-residue polypeptide: Microfibrillar-associated protein 5 (164 aa).

An N-terminal signal peptide occupies residues 1–28 (MLFLGQKALLLVLAISIPSDWLPLGVSG). The Cell attachment site motif lies at 30-32 (RGD). Asparagine 70 carries an N-linked (GlcNAc...) asparagine glycan.

This sequence belongs to the MFAP family. As to quaternary structure, interacts with TGFB2. Interacts with BMP2. Interacts with FBN1 (via N-terminal domain) and FBN2. In terms of processing, forms intermolecular disulfide bonds either with other MAGP-2 molecules or with other components of the microfibrils.

It localises to the secreted. Its subcellular location is the extracellular space. The protein localises to the extracellular matrix. Functionally, may play a role in hematopoiesis. In the cardiovascular system, could regulate growth factors or participate in cell signaling in maintaining large vessel integrity. Component of the elastin-associated microfibrils. The chain is Microfibrillar-associated protein 5 (Mfap5) from Mus musculus (Mouse).